A 101-amino-acid polypeptide reads, in one-letter code: Ubiquitin-related modifier 1 (101 aa).

A 1-thioglycine modification is found at G101. G101 is covalently cross-linked (Glycyl lysine isopeptide (Gly-Lys) (interchain with K-? in acceptor proteins)).

It belongs to the URM1 family. Component of a complex at least composed of URM1, CTU2/NCS2 and CTU1/ATPBD3. C-terminal thiocarboxylation occurs in 2 steps, it is first acyl-adenylated (-COAMP) via the hesA/moeB/thiF part of MOCS3, then thiocarboxylated (-COSH) via the rhodanese domain of MOCS3.

It localises to the cytoplasm. It functions in the pathway tRNA modification; 5-methoxycarbonylmethyl-2-thiouridine-tRNA biosynthesis. Acts as a sulfur carrier required for 2-thiolation of mcm(5)S(2)U at tRNA wobble positions of cytosolic tRNA(Lys), tRNA(Glu) and tRNA(Gln). Serves as sulfur donor in tRNA 2-thiolation reaction by being thiocarboxylated (-COSH) at its C-terminus by MOCS3. The sulfur is then transferred to tRNA to form 2-thiolation of mcm(5)S(2)U. Also acts as a ubiquitin-like protein (UBL) that is covalently conjugated via an isopeptide bond to lysine residues of target proteins such as MOCS3, ATPBD3, CTU2, USP15 and CAS. The thiocarboxylated form serves as substrate for conjugation and oxidative stress specifically induces the formation of UBL-protein conjugates. The protein is Ubiquitin-related modifier 1 of Bos taurus (Bovine).